The sequence spans 1480 residues: DNA polymerase zeta catalytic subunit (1480 aa).

Residues 403–488 (DRSKFPKSPL…GDTRKAGKRL (86 aa)) are disordered. The segment covering 411–427 (PLNSSQEVTIHSSQDRQ) has biased composition (polar residues). A compositionally biased stretch (basic and acidic residues) spans 457–468 (TKREIEFCRDLP). A compositionally biased stretch (polar residues) spans 470–479 (RPTSSEPNQG). Positions 1381, 1384, 1400, and 1403 each coordinate Zn(2+). Residues 1381–1403 (CSSCLKNNIEIIPDKINSLCSDC) form a CysA-type zinc finger. [4Fe-4S] cluster-binding residues include C1432, C1435, C1446, and C1451. The CysB motif motif lies at 1432-1451 (CRGCSKLSSSDPVLCKSNSC).

The protein belongs to the DNA polymerase type-B family. In terms of assembly, forms DNA polymerase zeta with rev7. [4Fe-4S] cluster serves as cofactor.

The protein resides in the mitochondrion. The protein localises to the nucleus. The catalysed reaction is DNA(n) + a 2'-deoxyribonucleoside 5'-triphosphate = DNA(n+1) + diphosphate. Nonessential DNA polymerase. Required for DNA damage induced mutagenesis. Involved in DNA repair, mitochondrial DNA repair and translesion synthesis. Has a role in the bypass of abasic (AP) sites. The protein is DNA polymerase zeta catalytic subunit (rev3) of Schizosaccharomyces pombe (strain 972 / ATCC 24843) (Fission yeast).